The sequence spans 177 residues: Bifunctional protein PyrR (177 aa).

Positions 99-111 (VVLVDDVLYTGRT) match the PRPP-binding motif.

This sequence belongs to the purine/pyrimidine phosphoribosyltransferase family. PyrR subfamily.

The catalysed reaction is UMP + diphosphate = 5-phospho-alpha-D-ribose 1-diphosphate + uracil. Regulates the transcription of the pyrimidine nucleotide (pyr) operon in response to exogenous pyrimidines. In terms of biological role, also displays a weak uracil phosphoribosyltransferase activity which is not physiologically significant. In Akkermansia muciniphila (strain ATCC BAA-835 / DSM 22959 / JCM 33894 / BCRC 81048 / CCUG 64013 / CIP 107961 / Muc), this protein is Bifunctional protein PyrR.